The primary structure comprises 338 residues: Formamidase (338 aa).

Residues 14-257 (VGIGLVQLQL…NEIITAEVRP (244 aa)) form the CN hydrolase domain. Catalysis depends on Glu-60, which acts as the Proton acceptor. The Proton donor role is filled by Lys-129. The Nucleophile role is filled by Cys-162.

It belongs to the carbon-nitrogen hydrolase superfamily. Aliphatic amidase family.

It carries out the reaction formamide + H2O = formate + NH4(+). Its function is as follows. Is an aliphatic amidase with a restricted substrate specificity, as it only hydrolyzes formamide. This chain is Formamidase, found in Allorhizobium ampelinum (strain ATCC BAA-846 / DSM 112012 / S4) (Agrobacterium vitis (strain S4)).